The chain runs to 461 residues: Serine carboxypeptidase-like 45 (461 aa).

The N-terminal stretch at 1-24 is a signal peptide; it reads MSPLQWLTISFALIIFHSLTVSSS. 3 disulfides stabilise this stretch: cysteine 86-cysteine 340, cysteine 243-cysteine 261, and cysteine 286-cysteine 309. N-linked (GlcNAc...) asparagine glycosylation is present at asparagine 168. Serine 177 is an active-site residue. The N-linked (GlcNAc...) asparagine glycan is linked to asparagine 244. Active-site residues include aspartate 377 and histidine 434.

The protein belongs to the peptidase S10 family. In terms of tissue distribution, ubiquitous.

Its subcellular location is the secreted. In terms of biological role, probable carboxypeptidase. The chain is Serine carboxypeptidase-like 45 (SCPL45) from Arabidopsis thaliana (Mouse-ear cress).